The following is an 843-amino-acid chain: N-acetyltransferase ESCO1 (843 aa).

The disordered stretch occupies residues 1 to 78 (MSIQEKSKEN…SASCSADKTA (78 aa)). Positions 18–28 (SEDENLEEEVE) are enriched in acidic residues. Polar residues predominate over residues 66-78 (STRSASCSADKTA). At serine 202 the chain carries Phosphoserine. The disordered stretch occupies residues 262–300 (NELRKSAHTQVSTSTKRPQIPLPLVPEHSDDQELEQAGK). Positions 269–278 (HTQVSTSTKR) are enriched in polar residues. A Glycyl lysine isopeptide (Lys-Gly) (interchain with G-Cter in SUMO2) cross-link involves residue lysine 335. Position 415 is a phosphoserine (serine 415). Residues 546 to 584 (DRTFPGSAPNQQHSVLSDEASINRKNRDVPPNHSQLKHD) form a disordered region. Basic and acidic residues predominate over residues 566-584 (SINRKNRDVPPNHSQLKHD). A CCHH-type zinc finger spans residues 620 to 644 (VSCNICGMLYTASNPEDETQHLLFH). Residues 775–777 (IWV), 783–788 (RKKIAS), and 815–817 (TPD) contribute to the acetyl-CoA site.

This sequence belongs to the acetyltransferase family. ECO subfamily. The subunit structure is controversial. Monomer. Homodimer. Phosphorylated during mitosis.

Its subcellular location is the nucleus. It is found in the chromosome. It catalyses the reaction L-lysyl-[protein] + acetyl-CoA = N(6)-acetyl-L-lysyl-[protein] + CoA + H(+). Functionally, acetyltransferase required for the establishment of sister chromatid cohesion. Couples the processes of cohesion and DNA replication to ensure that only sister chromatids become paired together. In contrast to the structural cohesins, the deposition and establishment factors are required only during S phase. Acts by mediating the acetylation of cohesin component SMC3. In Mus musculus (Mouse), this protein is N-acetyltransferase ESCO1 (Esco1).